The following is a 252-amino-acid chain: Phosphoglycolate phosphatase (252 aa).

D13 (nucleophile) is an active-site residue. Mg(2+) is bound by residues D13, D15, and D192.

Belongs to the HAD-like hydrolase superfamily. CbbY/CbbZ/Gph/YieH family. Monomer. Mg(2+) is required as a cofactor. The cofactor is chloride.

It carries out the reaction 2-phosphoglycolate + H2O = glycolate + phosphate. Its pathway is organic acid metabolism; glycolate biosynthesis; glycolate from 2-phosphoglycolate: step 1/1. Its function is as follows. Specifically catalyzes the dephosphorylation of 2-phosphoglycolate. Is involved in the dissimilation of the intracellular 2-phosphoglycolate formed during the DNA repair of 3'-phosphoglycolate ends, a major class of DNA lesions induced by oxidative stress. This Shigella flexneri protein is Phosphoglycolate phosphatase.